The following is a 569-amino-acid chain: Arylsulfatase I (569 aa).

Residues 1-23 (MHTLTGFSLVSLLSFGYLSWDWA) form the signal peptide. Residues Asp-55, Asp-56, and Cys-93 each contribute to the Ca(2+) site. Cys-93 acts as the Nucleophile in catalysis. At Cys-93 the chain carries 3-oxoalanine (Cys). Lys-147 lines the substrate pocket. His-149 is an active-site residue. His-239 contacts substrate. N-linked (GlcNAc...) asparagine glycans are attached at residues Asn-276 and Asn-288. Positions 297 and 298 each coordinate Ca(2+). Lys-315 contacts substrate. Residues Asn-466 and Asn-496 are each glycosylated (N-linked (GlcNAc...) asparagine). The tract at residues 510-539 (RAHPDFNGGAWGPWASDEEEEEEEGRARSF) is disordered.

This sequence belongs to the sulfatase family. The cofactor is Ca(2+). Post-translationally, the oxidation of Cys-93 residue to 3-oxoalanine (also known as C(alpha)-formylglycine) by SUMF1/Sulfatase-modifying factor 1, seems critical for catalytic activity. Expressed in placenta, in embryonic stem cells, fetal eyes and lens.

It is found in the secreted. Its subcellular location is the endoplasmic reticulum. In terms of biological role, displays arylsulfatase activity at neutral pH, when co-expressed with SUMF1; arylsulfatase activity is measured in the secretion medium of retinal cell line, but no activity is recorded when measured in cell extracts. Lacks arylsulfatase activity. The chain is Arylsulfatase I (ARSI) from Homo sapiens (Human).